A 268-amino-acid chain; its full sequence is MGLTRRIIPCLDLKAGRVVKGVNFEGLRDAGDPVELASRYNEQGADEVVFLDIAASKDNRDTMIDVIGRAADELFLPLTVGGGIRTVKDIQDILRAGADKVSLNTSAVKTPDVINEGSHLFGNQCIVLAEDVRRNYEMRDGVTPIHLADGRVCWYEVVIYGGSQRTGIDAVSWAQEGVKRGAGEILLTSMETDGVKTGFDLEITAAISENVDVPVIASGGVGTLEHFYDGFVKGKADACLAASVFHYGEMTIRSVKEYLASRGVLVRL.

Catalysis depends on residues Asp-12 and Asp-131.

The protein belongs to the HisA/HisF family. Heterodimer of HisH and HisF.

The protein resides in the cytoplasm. It catalyses the reaction 5-[(5-phospho-1-deoxy-D-ribulos-1-ylimino)methylamino]-1-(5-phospho-beta-D-ribosyl)imidazole-4-carboxamide + L-glutamine = D-erythro-1-(imidazol-4-yl)glycerol 3-phosphate + 5-amino-1-(5-phospho-beta-D-ribosyl)imidazole-4-carboxamide + L-glutamate + H(+). It functions in the pathway amino-acid biosynthesis; L-histidine biosynthesis; L-histidine from 5-phospho-alpha-D-ribose 1-diphosphate: step 5/9. Functionally, IGPS catalyzes the conversion of PRFAR and glutamine to IGP, AICAR and glutamate. The HisF subunit catalyzes the cyclization activity that produces IGP and AICAR from PRFAR using the ammonia provided by the HisH subunit. The chain is Imidazole glycerol phosphate synthase subunit HisF from Methanocorpusculum labreanum (strain ATCC 43576 / DSM 4855 / Z).